A 379-amino-acid polypeptide reads, in one-letter code: MSATLALTEQLIARASVTPDDQHCQQIMTERLAALGFECETIASHGVTNLWAVKRGTDGRDGKLLAFAGHTDVVPTGPLEQWTSPPFVPAHRDGKLYGRGAADMKTSLAAFVVASEEFVAAHPDHRGAIAFLITSDEEGPATDGTVKVVELLQERGERLDYCIVGEPTSTAELGDVVKNGRRGSMSGELVIKGVQGHIAYPHLAKNPIHLLAPALAELAAEQWDAGNEYFPPTTWQVSNLHAGTGATNVIPGHADLLFNFRFSTASTVEGLQARVHAILDKHGLEYTLKWSVSGLPFLTPRGELSGALEHAIRTETGITTELSTTGGTSDGRFIARICPQVIEFGPPNGSIHKIDEHIEVRFVDPLKNVYRRALEQLIA.

H70 provides a ligand contact to Zn(2+). D72 is an active-site residue. D103 lines the Zn(2+) pocket. The active-site Proton acceptor is E137. Residues E138, E166, and H352 each coordinate Zn(2+).

The protein belongs to the peptidase M20A family. DapE subfamily. As to quaternary structure, homodimer. It depends on Zn(2+) as a cofactor. Co(2+) serves as cofactor.

It carries out the reaction N-succinyl-(2S,6S)-2,6-diaminopimelate + H2O = (2S,6S)-2,6-diaminopimelate + succinate. It functions in the pathway amino-acid biosynthesis; L-lysine biosynthesis via DAP pathway; LL-2,6-diaminopimelate from (S)-tetrahydrodipicolinate (succinylase route): step 3/3. Functionally, catalyzes the hydrolysis of N-succinyl-L,L-diaminopimelic acid (SDAP), forming succinate and LL-2,6-diaminopimelate (DAP), an intermediate involved in the bacterial biosynthesis of lysine and meso-diaminopimelic acid, an essential component of bacterial cell walls. This Burkholderia cenocepacia (strain HI2424) protein is Succinyl-diaminopimelate desuccinylase.